The chain runs to 1578 residues: Formin-2 (1578 aa).

3 stretches are compositionally biased toward basic and acidic residues: residues 1–17 (MGNQDGKLKRSAGDASH), 26–35 (AGPRDAEITK), and 57–66 (TSKKKSKSDS). The interval 1-73 (MGNQDGKLKR…SDSRASVFSN (73 aa)) is disordered. A Phosphoserine modification is found at S89. Disordered stretches follow at residues 208–230 (KLLLQDSEEPAAPPTAISPQPGA), 244–383 (EAEK…PSPR), and 401–458 (RQLS…GLSR). 2 stretches are compositionally biased toward polar residues: residues 273 to 282 (SSGSHLTSET) and 290 to 300 (SAVTDSLSSPA). Residues 322–333 (DTDEECEEDAFE) show a composition bias toward acidic residues. Over residues 351–364 (ASQRLEKEPEEGMR) the composition is skewed to basic and acidic residues. Low complexity-rich tracts occupy residues 404-418 (SSPNHSPSQSPNQSP) and 427-442 (SVSRSSRTALASAAAP). Phosphoserine occurs at positions 459, 489, and 493. The tract at residues 587–634 (SMDYSEGQFPRREPSMWPSSKLPEEEPSPKDVDTEPKSSILESPKKCS) is disordered. The span at 608–622 (LPEEEPSPKDVDTEP) shows a compositional bias: basic and acidic residues. The stretch at 643–683 (DVKSEGQATVIQQLEQTIEDLRTKIAELEKQYPALDLEGPR) forms a coiled coil. Disordered stretches follow at residues 714-765 (RTLE…SGPQ), 786-836 (DAQQ…GNNC), and 880-944 (PALQ…MGIS). One can recognise an FH1 domain in the interval 735 to 1124 (PPPKAPPEGL…GCGFLFPPLP (390 aa)). Over residues 786-795 (DAQQIQSASQ) the composition is skewed to polar residues. Residues 803–817 (LGSDSQGQPSQPSLH) are compositionally biased toward low complexity. Over residues 818 to 827 (TESETSHEHS) the composition is skewed to basic and acidic residues. Positions 893–944 (LPAPPQPPPLPGLGVPPPPPAPPLPGMGIPPPPPLPGMGIPPPPPLPGMGIS) are enriched in pro residues. Repeat copies occupy residues 919–929 (MGIPPPPPLPG), 930–940 (MGIPPPPPLPG), 941–951 (MGISPLPPLPG), 952–962 (MGIPPPPPLPG), 963–973 (VGIPPPPPLPG), 974–984 (VGIPPPPPLPG), 985–995 (VGIPPPPPLPG), 996–1006 (VGIPPPPPLPG), 1007–1017 (VGIPPPPPLPG), 1018–1028 (VGIPPPPPLPG), 1029–1039 (VGIPPPPPLPG), and 1040–1050 (VGIPPPPPLPG). The segment at 919–1039 (MGIPPPPPLP…GIPPPPPLPG (121 aa)) is 12 X 11 AA tandem repeats of [MV]-G-I-P-P-P-P-P-L-P-G. Residues 1037–1097 (LPGVGIPPPP…PPPPLLPGSG (61 aa)) show a composition bias toward pro residues. Positions 1037–1108 (LPGVGIPPPP…PHSSQVGSST (72 aa)) are disordered. The FH2 domain occupies 1139-1554 (RKQLIEPCRP…KEAEEVCRQK (416 aa)). The stretch at 1419 to 1455 (QELFQASQMKFEDFQKDLRKLKKDLKACEAEAGKVYQ) forms a coiled coil. The tract at residues 1571–1578 (KAKISMKT) is important for interaction with SPIRE1.

It belongs to the formin homology family. Cappuccino subfamily. As to quaternary structure, interacts with SPIRE1. Binds actin. Interacts with CDKN1A. As to expression, detected in brain and in oocytes (at protein level). Expressed almost exclusively in the developing and mature central nervous system. Detected in oocytes.

The protein resides in the cytoplasm. It localises to the cytoskeleton. Its subcellular location is the cytosol. The protein localises to the perinuclear region. It is found in the nucleus. The protein resides in the nucleolus. It localises to the cell membrane. Its subcellular location is the cell cortex. The protein localises to the cytoplasmic vesicle membrane. Functionally, actin-binding protein that is involved in actin cytoskeleton assembly and reorganization. Acts as an actin nucleation factor and promotes assembly of actin filaments together with SPIRE1 and SPIRE2. Involved in intracellular vesicle transport along actin fibers, providing a novel link between actin cytoskeleton dynamics and intracellular transport. Required for asymmetric spindle positioning, asymmetric oocyte division and polar body extrusion during female germ cell meiosis. Plays a role in responses to DNA damage, cellular stress and hypoxia by protecting CDKN1A against degradation, and thereby plays a role in stress-induced cell cycle arrest. Also acts in the nucleus: together with SPIRE1 and SPIRE2, promotes assembly of nuclear actin filaments in response to DNA damage in order to facilitate movement of chromatin and repair factors after DNA damage. Protects cells against apoptosis by protecting CDKN1A against degradation. This Mus musculus (Mouse) protein is Formin-2 (Fmn2).